The chain runs to 106 residues: P4 prophage-derived uncharacterized protein t2655 (106 aa).

The polypeptide is P4 prophage-derived uncharacterized protein t2655 (Salmonella typhi).